Consider the following 512-residue polypeptide: Maturase K (512 aa).

It belongs to the intron maturase 2 family. MatK subfamily.

It localises to the plastid. Its subcellular location is the chloroplast. Its function is as follows. Usually encoded in the trnK tRNA gene intron. Probably assists in splicing its own and other chloroplast group II introns. In Filarum manserichense, this protein is Maturase K.